The chain runs to 567 residues: Phenylalanine--tRNA ligase beta subunit (567 aa).

In terms of domain architecture, B5 spans 284 to 359 (FAVRTKHVSH…RAYDFNDLTP (76 aa)). Residues aspartate 337, aspartate 343, aspartate 346, and aspartate 347 each contribute to the Mg(2+) site.

It belongs to the phenylalanyl-tRNA synthetase beta subunit family. Type 2 subfamily. As to quaternary structure, tetramer of two alpha and two beta subunits. It depends on Mg(2+) as a cofactor.

It is found in the cytoplasm. The enzyme catalyses tRNA(Phe) + L-phenylalanine + ATP = L-phenylalanyl-tRNA(Phe) + AMP + diphosphate + H(+). The polypeptide is Phenylalanine--tRNA ligase beta subunit (Halobacterium salinarum (strain ATCC 29341 / DSM 671 / R1)).